The primary structure comprises 143 residues: Transcription antitermination protein NusB (143 aa).

The protein belongs to the NusB family.

Involved in transcription antitermination. Required for transcription of ribosomal RNA (rRNA) genes. Binds specifically to the boxA antiterminator sequence of the ribosomal RNA (rrn) operons. This chain is Transcription antitermination protein NusB, found in Streptomyces griseus subsp. griseus (strain JCM 4626 / CBS 651.72 / NBRC 13350 / KCC S-0626 / ISP 5235).